The sequence spans 157 residues: SsrA-binding protein (157 aa).

Positions 136 to 151 (KRETSAKRDWSREKQR) are enriched in basic and acidic residues. Residues 136 to 157 (KRETSAKRDWSREKQRLLKQNS) are disordered.

The protein belongs to the SmpB family.

It is found in the cytoplasm. Functionally, required for rescue of stalled ribosomes mediated by trans-translation. Binds to transfer-messenger RNA (tmRNA), required for stable association of tmRNA with ribosomes. tmRNA and SmpB together mimic tRNA shape, replacing the anticodon stem-loop with SmpB. tmRNA is encoded by the ssrA gene; the 2 termini fold to resemble tRNA(Ala) and it encodes a 'tag peptide', a short internal open reading frame. During trans-translation Ala-aminoacylated tmRNA acts like a tRNA, entering the A-site of stalled ribosomes, displacing the stalled mRNA. The ribosome then switches to translate the ORF on the tmRNA; the nascent peptide is terminated with the 'tag peptide' encoded by the tmRNA and targeted for degradation. The ribosome is freed to recommence translation, which seems to be the essential function of trans-translation. This chain is SsrA-binding protein, found in Cereibacter sphaeroides (strain ATCC 17029 / ATH 2.4.9) (Rhodobacter sphaeroides).